The primary structure comprises 426 residues: 5-aminovalerate aminotransferase DavT (426 aa).

Residues 112–113 (GS), tyrosine 139, and 240–243 (DEVQ) contribute to the pyridoxal 5'-phosphate site. The residue at position 269 (lysine 269) is an N6-(pyridoxal phosphate)lysine. Threonine 298 lines the pyridoxal 5'-phosphate pocket.

The protein belongs to the class-III pyridoxal-phosphate-dependent aminotransferase family. Pyridoxal 5'-phosphate is required as a cofactor.

It catalyses the reaction 5-aminopentanoate + 2-oxoglutarate = 5-oxopentanoate + L-glutamate. In terms of biological role, catalyzes the conversion of 5-aminovalerate to 5-oxopentanoate. The sequence is that of 5-aminovalerate aminotransferase DavT (davT) from Pseudomonas aeruginosa (strain ATCC 15692 / DSM 22644 / CIP 104116 / JCM 14847 / LMG 12228 / 1C / PRS 101 / PAO1).